The following is a 390-amino-acid chain: GTPase Obg (390 aa).

The 159-residue stretch at 1 to 159 folds into the Obg domain; sequence MKFIDESLIR…RDLLLELMLL (159 aa). The OBG-type G domain maps to 160 to 333; that stretch reads ADVGMLGLPN…LCRDIMDFII (174 aa). GTP is bound by residues 166 to 173, 191 to 195, 213 to 216, 283 to 286, and 314 to 316; these read GLPNAGKS, FTTLV, DIPG, NKID, and SAA. The Mg(2+) site is built by S173 and T193. The disordered stretch occupies residues 363 to 382; sequence EHQFDDDEDWDDDWSEEDDE. Positions 366–382 are enriched in acidic residues; that stretch reads FDDDEDWDDDWSEEDDE.

It belongs to the TRAFAC class OBG-HflX-like GTPase superfamily. OBG GTPase family. In terms of assembly, monomer. Mg(2+) serves as cofactor.

Its subcellular location is the cytoplasm. Functionally, an essential GTPase which binds GTP, GDP and possibly (p)ppGpp with moderate affinity, with high nucleotide exchange rates and a fairly low GTP hydrolysis rate. Plays a role in control of the cell cycle, stress response, ribosome biogenesis and in those bacteria that undergo differentiation, in morphogenesis control. The chain is GTPase Obg from Haemophilus influenzae (strain ATCC 51907 / DSM 11121 / KW20 / Rd).